A 422-amino-acid chain; its full sequence is Protein phosphatase methylesterase 1 (422 aa).

The interval 1–27 (MSDMFRKSVLNKLPHLPPTRAPWADES) is disordered. Active-site residues include Ser207, Asp234, and His371.

It belongs to the AB hydrolase superfamily.

It catalyses the reaction [phosphatase 2A protein]-C-terminal L-leucine methyl ester + H2O = [phosphatase 2A protein]-C-terminal L-leucine + methanol + H(+). In terms of biological role, demethylates proteins that have been reversibly carboxymethylated. Demethylates the phosphatase PP2A catalytic subunit. The protein is Protein phosphatase methylesterase 1 (PPE1) of Cryptococcus neoformans var. neoformans serotype D (strain JEC21 / ATCC MYA-565) (Filobasidiella neoformans).